Here is a 172-residue protein sequence, read N- to C-terminus: MSSKRAKTKTTKKRPQRATSNVFAMFDQSQIQEFKEAFNMIDQNRDGFIDKEDLHDMLASLGKNPTDEYLDAMMNEAPGPINFTMFLTMFGEKLNGTDPEDVIRNAFACFDEEATGTIQEDYLRELLTTMGDRFTDEEVDELYREAPIDKKGNFNYIEFTRILKHGAKDKDD.

Residues 1–16 show a composition bias toward basic residues; it reads MSSKRAKTKTTKKRPQ. The tract at residues 1–20 is disordered; sequence MSSKRAKTKTTKKRPQRATS. Residue serine 2 is modified to N-acetylserine. A Phosphothreonine; by MLCK, CIT and ROCK2 modification is found at threonine 19. Serine 20 carries the phosphoserine; by CDC42BP, CIT, MLCK, PAK1, ROCK1, ROCK2, DAPK1, DAPK2 and ZIPK/DAPK3 modification. EF-hand domains follow at residues 29–64, 98–133, and 134–169; these read SQIQ…LGKN, DPED…MGDR, and FTDE…GAKD. Aspartate 42, asparagine 44, aspartate 46, and aspartate 53 together coordinate Ca(2+).

As to quaternary structure, myosin is a hexamer of 2 heavy chains and 4 light chains: interacts with myosin heavy chain MYO19. Interacts with LUZP1; the interaction results in inhibition of phosphorylation of MYL9 by DAPK3. Post-translationally, phosphorylation increases the actin-activated myosin ATPase activity and thereby regulates the contractile activity. It is required to generate the driving force in the migration of the cells but not necessary for localization of myosin-2 at the leading edge. Phosphorylation is required for myotube formation. Phosphorylated by DAPK3; DAPK3-mediated phosphorylation is inhibited by LUZP1.

The protein localises to the cytoplasm. It localises to the cytoskeleton. It is found in the cell cortex. Functionally, myosin regulatory subunit that plays an important role in regulation of both smooth muscle and nonmuscle cell contractile activity via its phosphorylation. Implicated in cytokinesis, receptor capping, and cell locomotion. In myoblasts, may regulate PIEZO1-dependent cortical actomyosin assembly involved in myotube formation. This Bos taurus (Bovine) protein is Myosin regulatory light polypeptide 9 (MYL9).